The following is a 308-amino-acid chain: Ribosomal RNA small subunit methyltransferase H (308 aa).

S-adenosyl-L-methionine is bound by residues 33-35 (GGH), Asp52, Phe78, Asp99, and Gln106. Residues 289–308 (EEIETNSRSRSAKLRVAEKL) form a disordered region.

This sequence belongs to the methyltransferase superfamily. RsmH family.

The protein localises to the cytoplasm. It carries out the reaction cytidine(1402) in 16S rRNA + S-adenosyl-L-methionine = N(4)-methylcytidine(1402) in 16S rRNA + S-adenosyl-L-homocysteine + H(+). Its function is as follows. Specifically methylates the N4 position of cytidine in position 1402 (C1402) of 16S rRNA. The protein is Ribosomal RNA small subunit methyltransferase H of Thermoanaerobacter sp. (strain X514).